The chain runs to 360 residues: Fructose import permease protein FrcC (360 aa).

9 helical membrane-spanning segments follow: residues 48 to 68 (AAVP…ILGG), 84 to 106 (AIVG…DLSV), 125 to 145 (GFPP…CGYI), 155 to 175 (LPPF…NFLY), 205 to 225 (AVFT…WYVL), 254 to 274 (MLIS…WALI), 284 to 304 (AGQF…ISLF), 310 to 330 (IMGM…LRLM), and 335 to 355 (QWTY…DQWI).

It belongs to the binding-protein-dependent transport system permease family. In terms of assembly, the complex is composed of two ATP-binding proteins (FrcA), two transmembrane proteins (FrcC) and a solute-binding protein (FrcB).

It is found in the cell inner membrane. Part of the high-affinity ABC transporter complex FrcBCA involved in fructose uptake. Is also a high-affinity transporter for ribose and mannose. Responsible for the translocation of the substrate across the membrane. The protein is Fructose import permease protein FrcC of Rhizobium meliloti (Ensifer meliloti).